Reading from the N-terminus, the 154-residue chain is Myoglobin (154 aa).

The Globin domain maps to Gly2–Lys148. Ser4 bears the Phosphoserine mark. His65 is a binding site for nitrite. His65 lines the O2 pocket. The residue at position 68 (Thr68) is a Phosphothreonine. Residue His94 participates in heme b binding.

This sequence belongs to the globin family. As to quaternary structure, monomeric.

It localises to the cytoplasm. Its subcellular location is the sarcoplasm. The catalysed reaction is Fe(III)-heme b-[protein] + nitric oxide + H2O = Fe(II)-heme b-[protein] + nitrite + 2 H(+). It carries out the reaction H2O2 + AH2 = A + 2 H2O. Its function is as follows. Monomeric heme protein which primary function is to store oxygen and facilitate its diffusion within muscle tissues. Reversibly binds oxygen through a pentacoordinated heme iron and enables its timely and efficient release as needed during periods of heightened demand. Depending on the oxidative conditions of tissues and cells, and in addition to its ability to bind oxygen, it also has a nitrite reductase activity whereby it regulates the production of bioactive nitric oxide. Under stress conditions, like hypoxia and anoxia, it also protects cells against reactive oxygen species thanks to its pseudoperoxidase activity. In Homo sapiens (Human), this protein is Myoglobin.